Reading from the N-terminus, the 2311-residue chain is Protein Ycf2 (2311 aa).

Residue 1652-1659 (GSIGTGRS) coordinates ATP.

Belongs to the Ycf2 family.

The protein resides in the plastid. The protein localises to the chloroplast stroma. Probable ATPase of unknown function. Its presence in a non-photosynthetic plant (Epifagus virginiana) and experiments in tobacco indicate that it has an essential function which is probably not related to photosynthesis. The chain is Protein Ycf2 from Lemna minor (Common duckweed).